A 179-amino-acid chain; its full sequence is UPF0302 protein EF_1554 (179 aa).

It belongs to the UPF0302 family.

The sequence is that of UPF0302 protein EF_1554 from Enterococcus faecalis (strain ATCC 700802 / V583).